The chain runs to 308 residues: UDP-N-acetylenolpyruvoylglucosamine reductase 2 (308 aa).

The region spanning 31–197 is the FAD-binding PCMH-type domain; that stretch reads RIGGPADYLV…AEVVMALRPA (167 aa). The active site involves R176. S226 serves as the catalytic Proton donor. E296 is an active-site residue.

Belongs to the MurB family. It depends on FAD as a cofactor.

It localises to the cytoplasm. The catalysed reaction is UDP-N-acetyl-alpha-D-muramate + NADP(+) = UDP-N-acetyl-3-O-(1-carboxyvinyl)-alpha-D-glucosamine + NADPH + H(+). The protein operates within cell wall biogenesis; peptidoglycan biosynthesis. In terms of biological role, cell wall formation. The chain is UDP-N-acetylenolpyruvoylglucosamine reductase 2 from Symbiobacterium thermophilum (strain DSM 24528 / JCM 14929 / IAM 14863 / T).